Consider the following 394-residue polypeptide: Na(+)/H(+) antiporter NhaA (394 aa).

A run of 11 helical transmembrane segments spans residues 11–31, 59–79, 95–115, 125–145, 155–175, 177–197, 203–220, 254–274, 296–316, 328–348, and 365–385; these read LEAASGILLLVSALLAMIFAN, LLMWVNDGFMAVFFILVGMEV, IFPAVAALGGMIIPALVYWFI, GWAIPMATDIAFALGIVALLS, FLLALAIIDDLGAIIVIALFF, HEMSMQALTIASIAIVILVAM, TGLINYAIIGTILWASVL, ALAPWCSFAILPLFAFSNAGV, LIIGKPVGVFLFSYVAVLLGI, IFAIAVLCGIGFTMSMFIAGL, and LGILMGTFVAAIIGYFLLKIT.

It belongs to the NhaA Na(+)/H(+) (TC 2.A.33) antiporter family.

It is found in the cell inner membrane. It catalyses the reaction Na(+)(in) + 2 H(+)(out) = Na(+)(out) + 2 H(+)(in). Its function is as follows. Na(+)/H(+) antiporter that extrudes sodium in exchange for external protons. This is Na(+)/H(+) antiporter NhaA from Actinobacillus pleuropneumoniae serotype 3 (strain JL03).